A 350-amino-acid chain; its full sequence is RNA 3'-terminal phosphate cyclase (350 aa).

Residues Gln100 and 290–294 (FLGDQ) each bind ATP. His314 (tele-AMP-histidine intermediate) is an active-site residue.

It belongs to the RNA 3'-terminal cyclase family. Type 1 subfamily.

It is found in the cytoplasm. The enzyme catalyses a 3'-end 3'-phospho-ribonucleotide-RNA + ATP = a 3'-end 2',3'-cyclophospho-ribonucleotide-RNA + AMP + diphosphate. Its function is as follows. Catalyzes the conversion of 3'-phosphate to a 2',3'-cyclic phosphodiester at the end of RNA. The mechanism of action of the enzyme occurs in 3 steps: (A) adenylation of the enzyme by ATP; (B) transfer of adenylate to an RNA-N3'P to produce RNA-N3'PP5'A; (C) and attack of the adjacent 2'-hydroxyl on the 3'-phosphorus in the diester linkage to produce the cyclic end product. The biological role of this enzyme is unknown but it is likely to function in some aspects of cellular RNA processing. The chain is RNA 3'-terminal phosphate cyclase from Thermococcus sibiricus (strain DSM 12597 / MM 739).